The primary structure comprises 374 residues: N-acetyldiaminopimelate deacetylase (374 aa).

Residue aspartate 68 is part of the active site. Glutamate 127 serves as the catalytic Proton acceptor.

Belongs to the peptidase M20A family. N-acetyldiaminopimelate deacetylase subfamily.

It carries out the reaction N-acetyl-(2S,6S)-2,6-diaminopimelate + H2O = (2S,6S)-2,6-diaminopimelate + acetate. It participates in amino-acid biosynthesis; L-lysine biosynthesis via DAP pathway; LL-2,6-diaminopimelate from (S)-tetrahydrodipicolinate (acetylase route): step 3/3. Its function is as follows. Catalyzes the conversion of N-acetyl-diaminopimelate to diaminopimelate and acetate. The protein is N-acetyldiaminopimelate deacetylase of Shouchella clausii (strain KSM-K16) (Alkalihalobacillus clausii).